Here is a 132-residue protein sequence, read N- to C-terminus: Myelin P2 protein (132 aa).

Serine 2 is subject to N-acetylserine. A (9Z)-octadecenoate-binding site is contributed by arginine 107. Arginine 107 contributes to the hexadecanoate binding site. A disulfide bridge links cysteine 118 with cysteine 125. A (9Z)-octadecenoate-binding site is contributed by 127–129 (RIY). 127–129 (RIY) is a hexadecanoate binding site.

Belongs to the calycin superfamily. Fatty-acid binding protein (FABP) family. As to quaternary structure, monomer.

The protein localises to the cytoplasm. In terms of biological role, may play a role in lipid transport protein in Schwann cells. May bind cholesterol. In Sus scrofa (Pig), this protein is Myelin P2 protein.